A 501-amino-acid polypeptide reads, in one-letter code: Cytochrome P450 7A1 (501 aa).

A helical membrane pass occupies residues 4–24 (IFWIWGICLSVCCCLWLILGL). Position 441 (Cys-441) interacts with heme.

It belongs to the cytochrome P450 family. Heme serves as cofactor. As to expression, detected in liver.

It is found in the endoplasmic reticulum membrane. It localises to the microsome membrane. It carries out the reaction cholesterol + reduced [NADPH--hemoprotein reductase] + O2 = 7alpha-hydroxycholesterol + oxidized [NADPH--hemoprotein reductase] + H2O + H(+). The enzyme catalyses 4beta-hydroxycholesterol + reduced [NADPH--hemoprotein reductase] + O2 = 4beta,7alpha-dihydroxycholesterol + oxidized [NADPH--hemoprotein reductase] + H2O + H(+). It catalyses the reaction lathosterol + reduced [NADPH--hemoprotein reductase] + O2 = 7alpha,8alpha-epoxy-5alpha-cholestan-3beta-ol + oxidized [NADPH--hemoprotein reductase] + H2O + H(+). The catalysed reaction is lathosterol + reduced [NADPH--hemoprotein reductase] + O2 = 5alpha-cholestan-7-oxo-3beta-ol + oxidized [NADPH--hemoprotein reductase] + H2O + H(+). It carries out the reaction 7-dehydrocholesterol + reduced [NADPH--hemoprotein reductase] + O2 = 7-oxocholesterol + oxidized [NADPH--hemoprotein reductase] + H2O + H(+). The enzyme catalyses (24S)-hydroxycholesterol + reduced [NADPH--hemoprotein reductase] + O2 = (24S)-7alpha-dihydroxycholesterol + oxidized [NADPH--hemoprotein reductase] + H2O + H(+). It catalyses the reaction (24R)-hydroxycholesterol + reduced [NADPH--hemoprotein reductase] + O2 = (24R)-7alpha-dihydroxycholesterol + oxidized [NADPH--hemoprotein reductase] + H2O + H(+). Its pathway is lipid metabolism; bile acid biosynthesis. It participates in steroid metabolism; cholesterol degradation. In terms of biological role, a cytochrome P450 monooxygenase involved in the metabolism of endogenous cholesterol and its oxygenated derivatives (oxysterols). Mechanistically, uses molecular oxygen inserting one oxygen atom into a substrate, and reducing the second into a water molecule, with two electrons provided by NADPH via cytochrome P450 reductase (CPR; NADPH-ferrihemoprotein reductase). Functions as a critical regulatory enzyme of bile acid biosynthesis and cholesterol homeostasis. Catalyzes the hydroxylation of carbon hydrogen bond at 7-alpha position of cholesterol, a rate-limiting step in cholesterol catabolism and bile acid biosynthesis. 7-alpha hydroxylates several oxysterols, including 4beta-hydroxycholesterol and 24-hydroxycholesterol. Catalyzes the oxidation of the 7,8 double bond of 7-dehydrocholesterol and lathosterol with direct and predominant formation of the 7-keto derivatives. In Oryctolagus cuniculus (Rabbit), this protein is Cytochrome P450 7A1 (CYP7A1).